Reading from the N-terminus, the 929-residue chain is Patatin-like phospholipase domain-containing protein CNE02340 (929 aa).

The segment at 37–85 (QPLDGDSSPLSPRSFSLPPESPQLSTASVKAPPPTWKYGPDNGTLRSGR) is disordered. Residues 43 to 54 (SSPLSPRSFSLP) show a composition bias toward low complexity. A helical transmembrane segment spans residues 126–146 (WPLLFFIFFIIYLEFSAYVIT). The 193-residue stretch at 301-493 (LCLSGGASFG…REDIPLGSLH (193 aa)) folds into the PNPLA domain. Residues 332-336 (GTSAG) carry the GXSXG motif. The active-site Nucleophile is the Ser334. Asp480 serves as the catalytic Proton acceptor. Disordered regions lie at residues 644 to 765 (ALSH…NFGD), 778 to 806 (LSSP…QRFR), and 818 to 929 (VSES…QDGA). Polar residues-rich tracts occupy residues 652–664 (NDPA…TNPE) and 745–764 (PTHS…SNFG). Positions 779 to 806 (SSPFRSIRSNTSSSSNNVQSPSSSQRFR) are enriched in low complexity. A compositionally biased stretch (basic and acidic residues) spans 856–878 (VESHSDRSEDEMLHSGANVKEEY).

The protein belongs to the PLPL family.

It is found in the membrane. In terms of biological role, probable lipid hydrolase. This Cryptococcus neoformans var. neoformans serotype D (strain JEC21 / ATCC MYA-565) (Filobasidiella neoformans) protein is Patatin-like phospholipase domain-containing protein CNE02340.